Consider the following 114-residue polypeptide: UPF0473 protein OEOE_1164 (114 aa).

It belongs to the UPF0473 family.

The protein is UPF0473 protein OEOE_1164 of Oenococcus oeni (strain ATCC BAA-331 / PSU-1).